The primary structure comprises 214 residues: Adenylate kinase (214 aa).

10-15 (GAGKGT) is an ATP binding site. The segment at 30–59 (STGDMLRAAIKAGTELGLEAKRVMDEGKLV) is NMP. Residues threonine 31, arginine 36, 57 to 59 (KLV), 85 to 88 (GFPR), and glutamine 92 contribute to the AMP site. The segment at 122 to 159 (GRRVHPASGRVYHVVYNPPKVEGKDNETGDDLIVRDDD) is LID. ATP contacts are provided by residues arginine 123 and 132–133 (VY). Arginine 156 and arginine 167 together coordinate AMP. Arginine 200 is an ATP binding site.

This sequence belongs to the adenylate kinase family. In terms of assembly, monomer.

It localises to the cytoplasm. The enzyme catalyses AMP + ATP = 2 ADP. Its pathway is purine metabolism; AMP biosynthesis via salvage pathway; AMP from ADP: step 1/1. Functionally, catalyzes the reversible transfer of the terminal phosphate group between ATP and AMP. Plays an important role in cellular energy homeostasis and in adenine nucleotide metabolism. The protein is Adenylate kinase of Alteromonas mediterranea (strain DSM 17117 / CIP 110805 / LMG 28347 / Deep ecotype).